We begin with the raw amino-acid sequence, 172 residues long: Signal peptidase complex catalytic subunit SEC11 (172 aa).

The Cytoplasmic segment spans residues 1-14 (MLSGLQNPRQAAAQ). A helical; Signal-anchor for type II membrane protein transmembrane segment spans residues 15–35 (LMNFALILSTAFMMWKGLSVA). Residues 36–172 (TDSPSPIVVV…MGLLVVIQRE (137 aa)) are Lumenal-facing. Active-site charge relay system residues include serine 49, histidine 90, and aspartate 115. The C-terminal short (CTS) helix stretch occupies residues 158-169 (VMLGIMGLLVVI).

This sequence belongs to the peptidase S26B family. In terms of assembly, component of the signal peptidase complex (SPC) composed of a catalytic subunit SEC11 and three accessory subunits SPC1, SPC2 and SPC3. The complex induces a local thinning of the ER membrane which is used to measure the length of the signal peptide (SP) h-region of protein substrates. This ensures the selectivity of the complex towards h-regions shorter than 18-20 amino acids. SPC associates with the translocon complex.

Its subcellular location is the endoplasmic reticulum membrane. The catalysed reaction is Cleavage of hydrophobic, N-terminal signal or leader sequences from secreted and periplasmic proteins.. Its function is as follows. Catalytic component of the signal peptidase complex (SPC) which catalyzes the cleavage of N-terminal signal sequences from nascent proteins as they are translocated into the lumen of the endoplasmic reticulum. Specifically cleaves N-terminal signal peptides that contain a hydrophobic alpha-helix (h-region) shorter than 18-20 amino acids. The chain is Signal peptidase complex catalytic subunit SEC11 (SEC11) from Metarhizium acridum (strain CQMa 102).